Here is a 208-residue protein sequence, read N- to C-terminus: Ribosomal RNA large subunit methyltransferase E (208 aa).

Gly63, Trp65, Asp83, Asp99, and Asp124 together coordinate S-adenosyl-L-methionine. Lys164 serves as the catalytic Proton acceptor.

This sequence belongs to the class I-like SAM-binding methyltransferase superfamily. RNA methyltransferase RlmE family.

The protein localises to the cytoplasm. The catalysed reaction is uridine(2552) in 23S rRNA + S-adenosyl-L-methionine = 2'-O-methyluridine(2552) in 23S rRNA + S-adenosyl-L-homocysteine + H(+). In terms of biological role, specifically methylates the uridine in position 2552 of 23S rRNA at the 2'-O position of the ribose in the fully assembled 50S ribosomal subunit. The polypeptide is Ribosomal RNA large subunit methyltransferase E (Salmonella choleraesuis (strain SC-B67)).